We begin with the raw amino-acid sequence, 192 residues long: dTTP/UTP pyrophosphatase (192 aa).

The active-site Proton acceptor is aspartate 68.

It belongs to the Maf family. YhdE subfamily. The cofactor is a divalent metal cation.

Its subcellular location is the cytoplasm. The enzyme catalyses dTTP + H2O = dTMP + diphosphate + H(+). It carries out the reaction UTP + H2O = UMP + diphosphate + H(+). In terms of biological role, nucleoside triphosphate pyrophosphatase that hydrolyzes dTTP and UTP. May have a dual role in cell division arrest and in preventing the incorporation of modified nucleotides into cellular nucleic acids. This chain is dTTP/UTP pyrophosphatase, found in Cereibacter sphaeroides (strain ATCC 17023 / DSM 158 / JCM 6121 / CCUG 31486 / LMG 2827 / NBRC 12203 / NCIMB 8253 / ATH 2.4.1.) (Rhodobacter sphaeroides).